Here is a 297-residue protein sequence, read N- to C-terminus: Acetyl-coenzyme A carboxylase carboxyl transferase subunit beta (297 aa).

The interval 1-23 (MSWIERILGRTSSSSSSSKSKVP) is disordered. The CoA carboxyltransferase N-terminal domain occupies 26-295 (VWTKCTSCEQ…PFKTAELIVE (270 aa)). Zn(2+)-binding residues include C30, C33, C49, and C52. A C4-type zinc finger spans residues 30–52 (CTSCEQVLYSEELKRNMHVCPKC).

Belongs to the AccD/PCCB family. As to quaternary structure, acetyl-CoA carboxylase is a heterohexamer composed of biotin carboxyl carrier protein (AccB), biotin carboxylase (AccC) and two subunits each of ACCase subunit alpha (AccA) and ACCase subunit beta (AccD). Requires Zn(2+) as cofactor.

The protein localises to the cytoplasm. It catalyses the reaction N(6)-carboxybiotinyl-L-lysyl-[protein] + acetyl-CoA = N(6)-biotinyl-L-lysyl-[protein] + malonyl-CoA. It functions in the pathway lipid metabolism; malonyl-CoA biosynthesis; malonyl-CoA from acetyl-CoA: step 1/1. In terms of biological role, component of the acetyl coenzyme A carboxylase (ACC) complex. Biotin carboxylase (BC) catalyzes the carboxylation of biotin on its carrier protein (BCCP) and then the CO(2) group is transferred by the transcarboxylase to acetyl-CoA to form malonyl-CoA. The chain is Acetyl-coenzyme A carboxylase carboxyl transferase subunit beta from Actinobacillus pleuropneumoniae serotype 3 (strain JL03).